A 246-amino-acid chain; its full sequence is 4-hydroxy-tetrahydrodipicolinate reductase (246 aa).

NAD(+) is bound at residue 7–12 (GCSGRM). Arg34 provides a ligand contact to NADP(+). NAD(+) is bound by residues 76–78 (ATT) and 102–105 (CPNT). His135 serves as the catalytic Proton donor/acceptor. Residue His136 coordinates (S)-2,3,4,5-tetrahydrodipicolinate. Lys139 serves as the catalytic Proton donor. 145–146 (GT) lines the (S)-2,3,4,5-tetrahydrodipicolinate pocket.

The protein belongs to the DapB family.

It localises to the cytoplasm. The catalysed reaction is (S)-2,3,4,5-tetrahydrodipicolinate + NAD(+) + H2O = (2S,4S)-4-hydroxy-2,3,4,5-tetrahydrodipicolinate + NADH + H(+). It carries out the reaction (S)-2,3,4,5-tetrahydrodipicolinate + NADP(+) + H2O = (2S,4S)-4-hydroxy-2,3,4,5-tetrahydrodipicolinate + NADPH + H(+). It participates in amino-acid biosynthesis; L-lysine biosynthesis via DAP pathway; (S)-tetrahydrodipicolinate from L-aspartate: step 4/4. Catalyzes the conversion of 4-hydroxy-tetrahydrodipicolinate (HTPA) to tetrahydrodipicolinate. The polypeptide is 4-hydroxy-tetrahydrodipicolinate reductase (Chlamydia felis (strain Fe/C-56) (Chlamydophila felis)).